The chain runs to 146 residues: Hemoglobin cathodic subunit beta (146 aa).

The 145-residue stretch at 2 to 146 (EWSSSERSTI…LIHALSRQYF (145 aa)) folds into the Globin domain. Histidine 63 and histidine 92 together coordinate heme b.

Belongs to the globin family. In terms of assembly, heterotetramer of two alpha chains and two beta chains. Red blood cells.

In terms of biological role, involved in oxygen transport from gills to the various peripheral tissues. This is Hemoglobin cathodic subunit beta from Gymnothorax unicolor (Brown moray).